The sequence spans 117 residues: Large ribosomal subunit protein bL19 (117 aa).

Belongs to the bacterial ribosomal protein bL19 family.

This protein is located at the 30S-50S ribosomal subunit interface and may play a role in the structure and function of the aminoacyl-tRNA binding site. This chain is Large ribosomal subunit protein bL19, found in Leptothrix cholodnii (strain ATCC 51168 / LMG 8142 / SP-6) (Leptothrix discophora (strain SP-6)).